Consider the following 128-residue polypeptide: Adrenodoxin (128 aa).

Serine 3 is modified (phosphoserine). At lysine 6 the chain carries N6-acetyllysine; alternate. Position 6 is an N6-succinyllysine; alternate (lysine 6). The 2Fe-2S ferredoxin-type domain maps to 7–111; that stretch reads VTVNFINRDG…NMTVRVPDAV (105 aa). Positions 46, 52, 55, and 92 each coordinate [2Fe-2S] cluster. Position 98 is an N6-succinyllysine (lysine 98). Serine 117 carries the post-translational modification Phosphoserine.

It belongs to the adrenodoxin/putidaredoxin family. As to quaternary structure, interacts with CYP11A1. The cofactor is [2Fe-2S] cluster.

It localises to the mitochondrion matrix. Essential for the synthesis of various steroid hormones. Participates in the reduction of mitochondrial cytochrome P450 for steroidogenesis. Transfers electrons from adrenodoxin reductase to CYP11A1, a cytochrome P450 that catalyzes cholesterol side-chain cleavage. Does not form a ternary complex with adrenodoxin reductase and CYP11A1 but shuttles between the two enzymes to transfer electrons. This Ovis aries (Sheep) protein is Adrenodoxin (FDX1).